The chain runs to 236 residues: tRNA (guanine-N(7)-)-methyltransferase (236 aa).

Residues methionine 1–phenylalanine 17 are compositionally biased toward basic and acidic residues. The tract at residues methionine 1–glycine 23 is disordered. S-adenosyl-L-methionine-binding residues include glutamate 67, glutamate 92, aspartate 119, and aspartate 141. Aspartate 141 is a catalytic residue. Lysine 145 and aspartate 177 together coordinate substrate.

The protein belongs to the class I-like SAM-binding methyltransferase superfamily. TrmB family.

It catalyses the reaction guanosine(46) in tRNA + S-adenosyl-L-methionine = N(7)-methylguanosine(46) in tRNA + S-adenosyl-L-homocysteine. Its pathway is tRNA modification; N(7)-methylguanine-tRNA biosynthesis. Functionally, catalyzes the formation of N(7)-methylguanine at position 46 (m7G46) in tRNA. The sequence is that of tRNA (guanine-N(7)-)-methyltransferase from Bradyrhizobium diazoefficiens (strain JCM 10833 / BCRC 13528 / IAM 13628 / NBRC 14792 / USDA 110).